Consider the following 240-residue polypeptide: Uridylate kinase (240 aa).

13–16 (KFSG) serves as a coordination point for ATP. Glycine 55 lines the UMP pocket. Residues glycine 56 and arginine 60 each contribute to the ATP site. Residues aspartate 76 and 137-144 (TGNPFFTT) contribute to the UMP site. Residues threonine 164, tyrosine 170, and aspartate 173 each coordinate ATP.

It belongs to the UMP kinase family. In terms of assembly, homohexamer.

The protein resides in the cytoplasm. The catalysed reaction is UMP + ATP = UDP + ADP. It functions in the pathway pyrimidine metabolism; CTP biosynthesis via de novo pathway; UDP from UMP (UMPK route): step 1/1. With respect to regulation, inhibited by UTP. In terms of biological role, catalyzes the reversible phosphorylation of UMP to UDP. The sequence is that of Uridylate kinase from Helicobacter pylori (strain ATCC 700392 / 26695) (Campylobacter pylori).